The primary structure comprises 242 residues: Sugar fermentation stimulation protein homolog (242 aa).

This sequence belongs to the SfsA family.

This chain is Sugar fermentation stimulation protein homolog, found in Enterococcus mundtii.